A 348-amino-acid chain; its full sequence is Serpentine receptor class beta-7 (348 aa).

7 consecutive transmembrane segments (helical) span residues 31-51 (QLIM…FQLL), 63-83 (LVGY…EAFI), 107-127 (GNLL…SITF), 145-165 (FLGP…ILLI), 191-211 (MFFI…FLLL), 241-261 (ISVI…TILL), and 280-300 (GAFM…SVYF).

This sequence belongs to the nematode receptor-like protein srb family.

It is found in the membrane. The sequence is that of Serpentine receptor class beta-7 (srb-7) from Caenorhabditis elegans.